Here is a 513-residue protein sequence, read N- to C-terminus: Zinc finger CCCH-type with G patch domain-containing protein (513 aa).

The segment at 155–178 (PCSYYLEGECRFDETKCRFSHGAL) adopts a C3H1-type zinc-finger fold. A compositionally biased stretch (acidic residues) spans 252–261 (DQEEDDELSS). A disordered region spans residues 252-282 (DQEEDDELSSEESNSSMNNESSDEAESDMDD). The span at 262-271 (EESNSSMNNE) shows a compositional bias: low complexity. Positions 272 to 282 (SSDEAESDMDD) are enriched in acidic residues. One can recognise a G-patch domain in the interval 312-358 (TRGIGSKLMEKMGYIHGTGLGSDGRGIVTPVSAQILPQGRSLDACME). Over residues 478–495 (VQMQSHKQELATLQAQER) the composition is skewed to polar residues. The interval 478–513 (VQMQSHKQELATLQAQERSLSKEQQTRKSKNKMFEF) is disordered. Residues 496-513 (SLSKEQQTRKSKNKMFEF) are compositionally biased toward basic and acidic residues.

The protein localises to the nucleus. In terms of biological role, transcription repressor. In Drosophila erecta (Fruit fly), this protein is Zinc finger CCCH-type with G patch domain-containing protein.